Reading from the N-terminus, the 89-residue chain is Signal recognition particle 19 kDa protein (89 aa).

The protein belongs to the SRP19 family. As to quaternary structure, part of the signal recognition particle protein translocation system, which is composed of SRP and FtsY. Archaeal SRP consists of a 7S RNA molecule of 300 nucleotides and two protein subunits: SRP54 and SRP19.

The protein localises to the cytoplasm. In terms of biological role, involved in targeting and insertion of nascent membrane proteins into the cytoplasmic membrane. Binds directly to 7S RNA and mediates binding of the 54 kDa subunit of the SRP. This is Signal recognition particle 19 kDa protein from Methanococcus vannielii (strain ATCC 35089 / DSM 1224 / JCM 13029 / OCM 148 / SB).